Reading from the N-terminus, the 419-residue chain is Aminoacyltransferase FemB (419 aa).

The protein belongs to the FemABX family. Homodimer. Interacts with FemA.

It is found in the cytoplasm. It carries out the reaction MurNAc-L-Ala-D-isoglutaminyl-L-Lys-(N(6)-tri-Gly)-D-Ala-D-Ala-diphospho-di-trans,octa-cis-undecaprenyl-GlcNAc + 2 glycyl-tRNA(Gly) = MurNAc-L-Ala-D-isoglutaminyl-L-Lys-(N(6)-penta-Gly)-D-Ala-D-Ala-diphospho-di-trans,octa-cis-undecaprenyl-GlcNAc + 2 tRNA(Gly) + 2 H(+). Its function is as follows. Catalyzes the formation of the pentaglycine interpeptide bridge, which is characteristic of the S.aureus peptidoglycan. Adds glycines 4 and 5 of the pentaglycine bridge, using glycyl-tRNA(Gly) as donor. Involved in resistance to methicillin. The polypeptide is Aminoacyltransferase FemB (femB) (Staphylococcus aureus (strain NCTC 8325 / PS 47)).